The chain runs to 232 residues: 2,3,4,5-tetrahydropyridine-2,6-dicarboxylate N-acetyltransferase (232 aa).

The protein belongs to the transferase hexapeptide repeat family. DapH subfamily.

The catalysed reaction is (S)-2,3,4,5-tetrahydrodipicolinate + acetyl-CoA + H2O = L-2-acetamido-6-oxoheptanedioate + CoA. Its pathway is amino-acid biosynthesis; L-lysine biosynthesis via DAP pathway; LL-2,6-diaminopimelate from (S)-tetrahydrodipicolinate (acetylase route): step 1/3. In terms of biological role, catalyzes the transfer of an acetyl group from acetyl-CoA to tetrahydrodipicolinate. The protein is 2,3,4,5-tetrahydropyridine-2,6-dicarboxylate N-acetyltransferase of Streptococcus pneumoniae (strain CGSP14).